The sequence spans 119 residues: Membrane-anchored ubiquitin-fold protein 6 (119 aa).

Residues 8–76 (IELKFRLADG…NNRTLAESRL (69 aa)) enclose the Ubiquitin-like domain. Cysteine 114 is lipidated: S-palmitoyl cysteine. Cysteine 116 carries the post-translational modification Cysteine methyl ester. The S-geranylgeranyl cysteine moiety is linked to residue cysteine 116. Positions 117–119 (TIL) are cleaved as a propeptide — removed in mature form.

In terms of tissue distribution, ubiquitous.

It localises to the cell membrane. May serve as docking site to facilitate the association of other proteins to the plasma membrane. The sequence is that of Membrane-anchored ubiquitin-fold protein 6 (MUB6) from Arabidopsis thaliana (Mouse-ear cress).